We begin with the raw amino-acid sequence, 315 residues long: tRNA-cytidine(32) 2-sulfurtransferase (315 aa).

The PP-loop motif signature appears at 54 to 59; that stretch reads SGGKDS. Positions 129, 132, and 220 each coordinate [4Fe-4S] cluster.

It belongs to the TtcA family. As to quaternary structure, homodimer. Mg(2+) is required as a cofactor. Requires [4Fe-4S] cluster as cofactor.

Its subcellular location is the cytoplasm. It catalyses the reaction cytidine(32) in tRNA + S-sulfanyl-L-cysteinyl-[cysteine desulfurase] + AH2 + ATP = 2-thiocytidine(32) in tRNA + L-cysteinyl-[cysteine desulfurase] + A + AMP + diphosphate + H(+). It functions in the pathway tRNA modification. Catalyzes the ATP-dependent 2-thiolation of cytidine in position 32 of tRNA, to form 2-thiocytidine (s(2)C32). The sulfur atoms are provided by the cysteine/cysteine desulfurase (IscS) system. The polypeptide is tRNA-cytidine(32) 2-sulfurtransferase (Bordetella avium (strain 197N)).